Reading from the N-terminus, the 151-residue chain is 6,7-dimethyl-8-ribityllumazine synthase (151 aa).

5-amino-6-(D-ribitylamino)uracil contacts are provided by residues phenylalanine 15, 49–51 (AVE), and 73–75 (AVI). 78–79 (ET) serves as a coordination point for (2S)-2-hydroxy-3-oxobutyl phosphate. Catalysis depends on histidine 81, which acts as the Proton donor. Residue phenylalanine 106 participates in 5-amino-6-(D-ribitylamino)uracil binding. Position 120 (arginine 120) interacts with (2S)-2-hydroxy-3-oxobutyl phosphate.

The protein belongs to the DMRL synthase family. In terms of assembly, forms an icosahedral capsid composed of 60 subunits, arranged as a dodecamer of pentamers.

It catalyses the reaction (2S)-2-hydroxy-3-oxobutyl phosphate + 5-amino-6-(D-ribitylamino)uracil = 6,7-dimethyl-8-(1-D-ribityl)lumazine + phosphate + 2 H2O + H(+). It functions in the pathway cofactor biosynthesis; riboflavin biosynthesis; riboflavin from 2-hydroxy-3-oxobutyl phosphate and 5-amino-6-(D-ribitylamino)uracil: step 1/2. In terms of biological role, catalyzes the formation of 6,7-dimethyl-8-ribityllumazine by condensation of 5-amino-6-(D-ribitylamino)uracil with 3,4-dihydroxy-2-butanone 4-phosphate. This is the penultimate step in the biosynthesis of riboflavin. This chain is 6,7-dimethyl-8-ribityllumazine synthase, found in Coxiella burnetii (strain CbuG_Q212) (Coxiella burnetii (strain Q212)).